The sequence spans 388 residues: Na(+)/H(+) antiporter NhaA (388 aa).

At 1-11 the chain is on the cytoplasmic side; it reads MKHLHRFFSSD. A helical transmembrane segment spans residues 12–31; it reads ASGGIILIIAAILAMIMANS. Residues 32-58 lie on the Periplasmic side of the membrane; the sequence is GATSGWYHDFLETPVQLRVGSLEINKN. Residues 45–58 form an important for dimerization region; that stretch reads PVQLRVGSLEINKN. The helical transmembrane segment at 59–80 threads the bilayer; it reads MLLWINDALMAVFFLLVGLEVK. Over 81 to 96 the chain is Cytoplasmic; the sequence is RELMQGSLASLRQAAF. The helical transmembrane segment at 97 to 116 threads the bilayer; that stretch reads PVIAAIGGMIVPALLYLAFN. The Periplasmic segment spans residues 117–122; sequence YADPIT. Residues 123–130 form a helical membrane-spanning segment; that stretch reads REGWAIPA. The Cytoplasmic segment spans residues 131 to 154; it reads ATDIAFALGVLALLGSRVPLALKI. Residues 155 to 176 traverse the membrane as a helical segment; that stretch reads FLMALAIIDDLGAIIIIALFYT. The Periplasmic portion of the chain corresponds to 177–180; sequence NDLS. A helical transmembrane segment spans residues 181–200; sequence MASLGVAAVAIAVLAVLNLC. Residues 201–204 are Cytoplasmic-facing; that stretch reads GARR. A helical transmembrane segment spans residues 205-222; sequence TGVYILVGVVLWTAVLKS. Position 223 (Gly-223) is a topological domain, periplasmic. Residues 224–236 traverse the membrane as a helical segment; that stretch reads VHATLAGVIVGFF. At 237–253 the chain is on the cytoplasmic side; that stretch reads IPLKEKHGRSPAKRLEH. Residues 254-272 form a helical membrane-spanning segment; the sequence is VLHPWVAYLILPLFAFANA. At 273–286 the chain is on the periplasmic side; that stretch reads GVSLQGVTLDGLTS. The chain crosses the membrane as a helical span at residues 287–310; the sequence is ILPLGIIAGLLIGKPLGISLFCWL. Topologically, residues 311 to 339 are cytoplasmic; it reads ALRLKLAHLPEGTTYQQIMVVGILCGIGF. Residues 340 to 350 form a helical membrane-spanning segment; the sequence is TMSIFIASLAF. Over 351–357 the chain is Periplasmic; sequence GSVDPEL. A helical membrane pass occupies residues 358–380; it reads INWAKLGILVGSISSAVIGYSWL. At 381–388 the chain is on the cytoplasmic side; that stretch reads RVRLRPSV.

This sequence belongs to the NhaA Na(+)/H(+) (TC 2.A.33) antiporter family. Monomer. Homodimer. Under routine stress conditions, the monomeric form is fully functional. However, the dimeric form is much more efficient in conferring growth resistance under extreme stress conditions.

The protein resides in the cell inner membrane. The enzyme catalyses Na(+)(in) + 2 H(+)(out) = Na(+)(out) + 2 H(+)(in). It catalyses the reaction Li(+)(in) + 2 H(+)(out) = Li(+)(out) + 2 H(+)(in). With respect to regulation, activity is regulated by pH. Active at alkaline pH. Activity is strongly down-regulated below pH 6.5 and a dramatic increase in activity is observed upon increase of the pH from 6.5 to 8.5. In terms of biological role, na(+)/H(+) antiporter that extrudes sodium in exchange for external protons. Plays an important role in the regulation of intracellular pH, cellular Na(+) content and cell volume. Catalyzes the exchange of 2 H(+) per Na(+). This stoichiometry applies at both neutral and alkaline pH values. In addition, can also transport lithium and is involved in lithium detoxification. Binding of the Li(+) and H(+) ligands to NhaA is coupled and antagonistic. In Escherichia coli (strain K12), this protein is Na(+)/H(+) antiporter NhaA.